We begin with the raw amino-acid sequence, 607 residues long: Autophagy-related protein 16-1 (607 aa).

Positions 13-43 (WKRHIAEELRRRDRLQRQAFEEIILQYTKLL) are interaction with ATG5. Residues 79 to 230 (DSQLQEMAQL…QKELAEAAKE (152 aa)) adopt a coiled-coil conformation. Ser-139 carries the phosphoserine modification. The tract at residues 207–230 (AENEKDSRRRQARLQKELAEAAKE) is WIPI2-binding. The tract at residues 230-242 (EPLPVEQDDDIEV) is RB1CC1-binding. Phosphoserine occurs at positions 269 and 287. The short motif at 296–299 (DIMD) is the Caspase cleavage element. WD repeat units follow at residues 320 to 359 (AHDG…CEFK), 364 to 403 (GSNA…LRHT), 406 to 445 (GHSG…CIKT), 447 to 484 (FAGS…VVRE), 486 to 525 (ELLG…VKQT), 532 to 573 (KCGS…KVLS), and 575 to 607 (QHSS…WAQP).

This sequence belongs to the WD repeat ATG16 family. Homodimer. Homooligomer. Heterooligomer with ATG16L2. Interacts with WIPI1. Interacts with WIPI2. Interacts with RB1CC1; the interaction is required for ULK1 complex-dependent autophagy. Interacts with ATG5. Part of the minor complex composed of 4 sets of ATG12-ATG5 and ATG16L1 (400 kDa); this complex interacts with ATG3 leading to disruption of ATG7 interaction and promotion of ATG8-like proteins lipidation. Part of the major complex composed of 8 sets of ATG12-ATG5 and ATG16L1 (800 kDa). Interacts with RAB33B (GTP- and GDP-bound forms); the complex consists of a tetramer where two RAB33B molecules bind independently one molecule of the ATG16L1 homodimer; the interaction promotes ATG12-ATG5-ATG16L1 complex recruitment to phagophores. Interacts (via WD repeats) with TMEM59; the interaction mediates unconventional autophagic activity of TMEM59. Interacts with TLR2. Interacts (via WD repeats) with MEFV. Interacts (via N-terminal) with CLTC. Interacts with NOD1. Interacts with NOD2. Interacts with TUFM. Interacts with TRIM16. Interacts (via WD repeats) with SPATA33. Interacts with Irgm1. Proteolytic cleavage by activated CASP3 leads to degradation and may regulate autophagy upon cellular stress and apoptotic stimuli. In terms of processing, phosphorylation at Ser-139 promotes association with the ATG12-ATG5 conjugate to form the ATG12-ATG5-ATG16L1 complex. Widely expressed. Expressed in the testis and sperm midpiece (at protein level). In terms of tissue distribution, expressed in liver. As to expression, highly expressed in liver. Expressed in brain.

The protein resides in the cytoplasm. It localises to the preautophagosomal structure membrane. Its subcellular location is the endosome membrane. It is found in the lysosome membrane. Its function is as follows. Plays an essential role in both canonical and non-canonical autophagy: interacts with ATG12-ATG5 to mediate the lipidation to ATG8 family proteins (MAP1LC3A, MAP1LC3B, MAP1LC3C, GABARAPL1, GABARAPL2 and GABARAP). Acts as a molecular hub, coordinating autophagy pathways via distinct domains that support either canonical or non-canonical signaling. During canonical autophagy, interacts with ATG12-ATG5 to mediate the conjugation of phosphatidylethanolamine (PE) to ATG8 proteins, to produce a membrane-bound activated form of ATG8. Thereby, controls the elongation of the nascent autophagosomal membrane. As part of the ATG8 conjugation system with ATG5 and ATG12, required for recruitment of LRRK2 to stressed lysosomes and induction of LRRK2 kinase activity in response to lysosomal stress. Also involved in non-canonical autophagy, a parallel pathway involving conjugation of ATG8 proteins to single membranes at endolysosomal compartments, probably by catalyzing conjugation of phosphatidylserine (PS) to ATG8. Non-canonical autophagy plays a key role in epithelial cells to limit lethal infection by influenza A (IAV) virus. Regulates mitochondrial antiviral signaling (MAVS)-dependent type I interferon (IFN-I) production. Negatively regulates NOD1- and NOD2-driven inflammatory cytokine response. Instead, promotes an autophagy-dependent antibacterial pathway together with NOD1 or NOD2. Plays a role in regulating morphology and function of Paneth cell. The sequence is that of Autophagy-related protein 16-1 from Mus musculus (Mouse).